The sequence spans 763 residues: Phosphoglycerol transferase I (763 aa).

The next 4 membrane-spanning stretches (helical) occupy residues 1 to 21 (MSEL…AWKA), 26 to 46 (WWFA…ITLF), 77 to 97 (ILPG…LGWI), and 108 to 128 (FGYS…SPAF).

Belongs to the OpgB family.

It is found in the cell inner membrane. The enzyme catalyses a phosphatidylglycerol + a membrane-derived-oligosaccharide D-glucose = a 1,2-diacyl-sn-glycerol + a membrane-derived-oligosaccharide 6-(glycerophospho)-D-glucose.. It participates in glycan metabolism; osmoregulated periplasmic glucan (OPG) biosynthesis. In terms of biological role, transfers a phosphoglycerol residue from phosphatidylglycerol to the membrane-bound nascent glucan backbones. The protein is Phosphoglycerol transferase I of Escherichia coli (strain SMS-3-5 / SECEC).